Reading from the N-terminus, the 533-residue chain is Lymphocyte cytosolic protein 2 (533 aa).

Residues 12 to 78 enclose the SAM domain; sequence VLAWNSDNLA…SQDINKNEER (67 aa). Phosphotyrosine is present on Tyr23. Disordered stretches follow at residues 78 to 359 and 374 to 419; these read RRSI…PLAH and SASL…TPLD. The segment covering 94–144 has biased composition (acidic residues); it reads ETESHEEDDGGWSSFEDDYESPNDDDPDGEDDGDYESPNEEEQALVDDAAD. A compositionally biased stretch (polar residues) spans 151-172; that stretch reads NNEEALQSSILPPNSFHNTNSM. Residues 186 to 201 are compositionally biased toward pro residues; the sequence is PPVPPLRPKPALPPLP. Phosphoserine is present on residues Ser207 and Ser210. The segment covering 340-354 has biased composition (polar residues); it reads NTFPSRSVQPSSKNT. Ser376 and Ser410 each carry phosphoserine. Residues 400–411 show a composition bias toward pro residues; sequence LPVPNRPQPPSP. The SH2 domain maps to 422–530; that stretch reads WYVSYITRPE…RYQCTLTHAA (109 aa).

In terms of assembly, interacts with SLA. Interacts with CBLB. Interacts with GRB2. Interacts with SHB. Interacts with PRAM1. Interacts (via SH2 domain) with CD6 (via tyrosine phosphorylated C-terminus). Interacts with FYB1 and the phosphorylated form of FYB2. Interacts with 14-3-3 adapter/YWHAZ; this phosphorylation leads to YWHAZ proteolytic degradation. Interacts with VAV1; this interaction plays a role in TCR-mediated cytokine production. Interacts with AGER; this interaction plays an important role in AGER-mediated pro-inflammatory responses and cytokine release. Phosphorylated after T-cell receptor activation by ZAP70, ITK and TXK, which leads to the up-regulation of Th1 preferred cytokine IL-2. SYK-dependent phosphorylation is required for recruitment of PI3K signaling components. As to expression, highly expressed in spleen, thymus, and peripheral blood leukocytes.

The protein resides in the cytoplasm. Its function is as follows. Adapter protein primarily involved in signaling pathways within T-cells, as well as other immune cells such as platelets, mast cells, and natural killer (NK) cells. Plays a crucial role for transducing signal from the T-cell receptor (TCR) after antigen recognition leading to T-cell activation. Mechanistically, once phosphorylated by the kinase ZAP70, mediates interactions with the guanine-nucleotide exchange factor VAV1, the adapter protein NCK and the kinase ITK. In turn, stimulates the activation of PKC-theta/PRKCQ and NF-kappa-B transcriptional activity in response to CD3 and CD28 costimulation. Also plays an essential role in AGER-induced signaling pathways including p38 MAPK and ERK1/2 activation leading to cytokine release and pro-inflammatory responses. This Mus musculus (Mouse) protein is Lymphocyte cytosolic protein 2 (Lcp2).